Reading from the N-terminus, the 509-residue chain is 2-succinyl-5-enolpyruvyl-6-hydroxy-3-cyclohexene-1-carboxylate synthase (509 aa).

It belongs to the TPP enzyme family. MenD subfamily. In terms of assembly, homodimer. Mg(2+) serves as cofactor. Mn(2+) is required as a cofactor. It depends on thiamine diphosphate as a cofactor.

The enzyme catalyses isochorismate + 2-oxoglutarate + H(+) = 5-enolpyruvoyl-6-hydroxy-2-succinyl-cyclohex-3-ene-1-carboxylate + CO2. The protein operates within quinol/quinone metabolism; 1,4-dihydroxy-2-naphthoate biosynthesis; 1,4-dihydroxy-2-naphthoate from chorismate: step 2/7. Its pathway is quinol/quinone metabolism; menaquinone biosynthesis. Catalyzes the thiamine diphosphate-dependent decarboxylation of 2-oxoglutarate and the subsequent addition of the resulting succinic semialdehyde-thiamine pyrophosphate anion to isochorismate to yield 2-succinyl-5-enolpyruvyl-6-hydroxy-3-cyclohexene-1-carboxylate (SEPHCHC). This Corynebacterium diphtheriae (strain ATCC 700971 / NCTC 13129 / Biotype gravis) protein is 2-succinyl-5-enolpyruvyl-6-hydroxy-3-cyclohexene-1-carboxylate synthase.